Reading from the N-terminus, the 146-residue chain is Angiogenin (146 aa).

An N-terminal signal peptide occupies residues 1–24; sequence MAMSLCPLLLVFVLGLGLTPPSLA. Glutamine 25 is modified (pyrrolidone carboxylic acid). The active-site Proton acceptor is the histidine 37. A tRNA-binding site is contributed by arginine 45. Cystine bridges form between cysteine 50-cysteine 105, cysteine 63-cysteine 116, and cysteine 81-cysteine 131. The Nucleolar localization signal signature appears at 55–59; the sequence is VRRHL. TRNA is bound by residues cysteine 105 and isoleucine 127. The Proton donor role is filled by histidine 138.

This sequence belongs to the pancreatic ribonuclease family. Homodimer. Interacts with RNH1; inhibiting ANG ribonuclease activity. Interacts with PCNA.

Its subcellular location is the secreted. The protein resides in the nucleus. The protein localises to the nucleolus. It is found in the cytoplasm. It localises to the stress granule. Its activity is regulated as follows. Has weak tRNA ribonuclease activity by itself due to partial autoinhibition by its C-terminus, which folds into a short alpha-helix that partially occludes the substrate-binding site. In absence of stress, the ribonuclease activity is inhibited by RNH1 in the cytoplasm. In response to stress, dissociates from RNH1 in the cytoplasm and associates with cytoplasmic ribosomes with vacant A-sites: ribosomes directly activate the tRNA ribonuclease activity of ANG by refolding the C-terminal alpha-helix. In response to stress, the angiogenic activity of ANG is inhibited by RNH1 in the nucleus. Secreted ribonuclease that can either promote or restrict cell proliferation of target cells, depending on the context. Endocytosed in target cells via its receptor PLXNB2 and translocates to the cytoplasm or nucleus. Under stress conditions, localizes to the cytoplasm and promotes the assembly of stress granules (SGs): specifically cleaves a subset of tRNAs within anticodon loops to produce tRNA-derived stress-induced fragments (tiRNAs), resulting in translation repression and inhibition of cell proliferation. tiRNas also prevent formation of apoptosome, thereby promoting cell survival. Preferentially cleaves RNAs between a pyrimidine and an adenosine residue, suggesting that it cleaves the anticodon loop of tRNA(Ala) (32-UUAGCAU-38) after positions 33 and 36. Cleaves a subset of tRNAs, including tRNA(Ala), tRNA(Glu), tRNA(Gly), tRNA(Lys), tRNA(Val), tRNA(His), tRNA(Asp) and tRNA(Sec). Under growth conditions and in differentiated cells, translocates to the nucleus and stimulates ribosomal RNA (rRNA) transcription, including that containing the initiation site sequences of 45S rRNA, thereby promoting cell growth and proliferation. Angiogenin induces vascularization of normal and malignant tissues via its ability to promote rRNA transcription. Involved in hematopoietic stem and progenitor cell (HSPC) growth and survival by promoting rRNA transcription in growth conditions and inhibiting translation in response to stress, respectively. Mediates the crosstalk between myeloid and intestinal epithelial cells to protect the intestinal epithelial barrier integrity: secreted by myeloid cells and promotes intestinal epithelial cells proliferation and survival. Also mediates osteoclast-endothelial cell crosstalk in growing bone: produced by osteoclasts and protects the neighboring vascular cells against senescence by promoting rRNA transcription. The chain is Angiogenin (ANG) from Equus caballus (Horse).